The sequence spans 227 residues: uncharacterized protein (227 aa).

2 helical membrane passes run 13 to 35 (CVRA…FAFS) and 155 to 177 (IFFR…MVFL). Positions 192 to 227 (GDARPRPAGPQGTARSRTDEAQVSPGTPPECPVSVF) are disordered. Over residues 217–227 (GTPPECPVSVF) the composition is skewed to pro residues.

The protein resides in the cell membrane. This is an uncharacterized protein from Treponema pallidum (strain Nichols).